The sequence spans 543 residues: Terpineol synthase, chloroplastic (543 aa).

A disordered region spans residues 1 to 22 (MNTEPSPNHYSAISSSDQNLTR). The (2E)-geranyl diphosphate site is built by Arg263, Asp300, Asp304, Arg435, and Asn438. Residues Asp300 and Asp304 each coordinate Mg(2+). The DDXXD motif motif lies at 300 to 304 (DDVYD). Positions 438, 442, and 446 each coordinate Mg(2+).

It belongs to the terpene synthase family. Tpsb subfamily. Monomer. Requires Mg(2+) as cofactor. The cofactor is Mn(2+). As to expression, confined to flowers.

It is found in the plastid. Its subcellular location is the chloroplast. The enzyme catalyses (2E)-geranyl diphosphate + H2O = (S)-alpha-terpineol + diphosphate. The catalysed reaction is (2E)-geranyl diphosphate = sabinene + diphosphate. It catalyses the reaction (2E)-geranyl diphosphate = beta-myrcene + diphosphate. It carries out the reaction (2E)-geranyl diphosphate = limonene + diphosphate. The enzyme catalyses (2E)-geranyl diphosphate + H2O = 1,8-cineole + diphosphate. Its pathway is secondary metabolite biosynthesis; terpenoid biosynthesis. In terms of biological role, monoterpene synthase (TPS) involved in the biosynthesis of monoterpene natural products of the 'cineole cassette', volatile compounds present in floral scent. Catalyzes the conversion of (2E)-geranyl diphosphate (GPP) into alpha-terpineol and, as minor products, sabinene, beta-myrcene, limonene and 1,8-cineole. This chain is Terpineol synthase, chloroplastic, found in Nicotiana alata (Winged tobacco).